The following is a 164-amino-acid chain: UPF0304 protein Ent638_2838 (164 aa).

It belongs to the UPF0304 family.

This Enterobacter sp. (strain 638) protein is UPF0304 protein Ent638_2838.